The sequence spans 485 residues: Glutamyl-tRNA(Gln) amidotransferase subunit A (485 aa).

Residues Lys78 and Ser153 each act as charge relay system in the active site. Ser177 functions as the Acyl-ester intermediate in the catalytic mechanism.

It belongs to the amidase family. GatA subfamily. Heterotrimer of A, B and C subunits.

The catalysed reaction is L-glutamyl-tRNA(Gln) + L-glutamine + ATP + H2O = L-glutaminyl-tRNA(Gln) + L-glutamate + ADP + phosphate + H(+). Its function is as follows. Allows the formation of correctly charged Gln-tRNA(Gln) through the transamidation of misacylated Glu-tRNA(Gln) in organisms which lack glutaminyl-tRNA synthetase. The reaction takes place in the presence of glutamine and ATP through an activated gamma-phospho-Glu-tRNA(Gln). The polypeptide is Glutamyl-tRNA(Gln) amidotransferase subunit A (Bacillus cereus (strain ZK / E33L)).